Reading from the N-terminus, the 362-residue chain is 3-isopropylmalate dehydrogenase (362 aa).

Residue 78–91 coordinates NAD(+); the sequence is GPKWETLPPDEQPE. Residues arginine 99, arginine 109, arginine 138, and aspartate 227 each coordinate substrate. Residues aspartate 227, aspartate 251, and aspartate 255 each coordinate Mg(2+). Residue 285-297 participates in NAD(+) binding; that stretch reads GSAPDIAGQGIAN.

Belongs to the isocitrate and isopropylmalate dehydrogenases family. LeuB type 1 subfamily. In terms of assembly, homodimer. Mg(2+) is required as a cofactor. Mn(2+) serves as cofactor.

The protein localises to the cytoplasm. It catalyses the reaction (2R,3S)-3-isopropylmalate + NAD(+) = 4-methyl-2-oxopentanoate + CO2 + NADH. It functions in the pathway amino-acid biosynthesis; L-leucine biosynthesis; L-leucine from 3-methyl-2-oxobutanoate: step 3/4. Functionally, catalyzes the oxidation of 3-carboxy-2-hydroxy-4-methylpentanoate (3-isopropylmalate) to 3-carboxy-4-methyl-2-oxopentanoate. The product decarboxylates to 4-methyl-2 oxopentanoate. In Geobacter metallireducens (strain ATCC 53774 / DSM 7210 / GS-15), this protein is 3-isopropylmalate dehydrogenase.